The following is a 129-amino-acid chain: Procyclic form-specific polypeptide A-beta (129 aa).

Positions 1-27 are cleaved as a signal peptide; it reads MAPRSLYLLAVLLFSANLFAGVGFAAA. Residues 27-111 are disordered; sequence AAEGPEDKGL…PEPEPGAATL (85 aa). The span at 53–104 shows a compositional bias: acidic residues; that stretch reads DDTNGTDPDPEPEPEPEPEPEPEPEPEPEPEPEPEPEPEPEPEPEPEPEPEP. Asn56 is a glycosylation site (N-linked (GlcNAc...) asparagine). 24 tandem repeats follow at residues 59–60, 61–62, 63–64, 65–66, 67–68, 69–70, 71–72, 73–74, 75–76, 77–78, 79–80, 81–82, 83–84, 85–86, 87–88, 89–90, 91–92, 93–94, 95–96, 97–98, 99–100, 101–102, 103–104, and 105–106. A 24 X 2 AA tandem repeats of [DE]-P region spans residues 59-106; it reads DPDPEPEPEPEPEPEPEPEPEPEPEPEPEPEPEPEPEPEPEPEPEPEP. A lipid anchor (GPI-anchor amidated glycine) is attached at Gly107. Positions 108–129 are excised as a propeptide; sequence AATLKSVALPFAIAAVGLVAAF.

Its subcellular location is the cell membrane. Functionally, major surface antigen of procyclic forms. The protein is Procyclic form-specific polypeptide A-beta (PARPA-BETA) of Trypanosoma brucei brucei.